A 177-amino-acid polypeptide reads, in one-letter code: Cytidylate kinase (177 aa).

ATP is bound at residue 7–15 (GSPGSGTTT).

It belongs to the cytidylate kinase family. Type 2 subfamily.

Its subcellular location is the cytoplasm. The catalysed reaction is CMP + ATP = CDP + ADP. It catalyses the reaction dCMP + ATP = dCDP + ADP. This Methanocorpusculum labreanum (strain ATCC 43576 / DSM 4855 / Z) protein is Cytidylate kinase.